Reading from the N-terminus, the 109-residue chain is Oncomodulin-1 (109 aa).

Ser-2 carries the N-acetylserine modification. 2 EF-hand domains span residues 39 to 74 and 78 to 109; these read MSANQVKDVFRFIDNDQSGYLDEEELKFFLQKFESG and LTESETKSLMAAADNDGDGKIGAEEFQEMVHS. 10 residues coordinate Ca(2+): Asp-52, Asp-54, Ser-56, Tyr-58, Glu-63, Asp-91, Asp-93, Asp-95, Lys-97, and Glu-102.

It belongs to the parvalbumin family.

Functionally, has some calmodulin-like activity with respect to enzyme activation and growth regulation. Binds two calcium ions. In Homo sapiens (Human), this protein is Oncomodulin-1 (OCM).